Here is a 521-residue protein sequence, read N- to C-terminus: DEAD-box ATP-dependent RNA helicase 12 (521 aa).

The interval 1–97 (MHHPRARYPP…QQWLRRDQAT (97 aa)) is disordered. Over residues 13–50 (TSGGGGGGGGGGGGGRGNGGGGFGGGGGGGGGNHGYYG) the composition is skewed to gly residues. Over residues 51 to 89 (RGPQPQPQQQHYHHQAQQLHQHQQQQQHAQRNSSSQQQQ) the composition is skewed to low complexity. The Q motif motif lies at 147–175 (NEFEDYFLKRELLMGIYEKGFERPSPIQE). The region spanning 178–348 (IPIALTGSDI…EKYLPRPYVI (171 aa)) is the Helicase ATP-binding domain. Residue 191-198 (AKNGTGKT) coordinates ATP. Positions 296-299 (DEAD) match the DEAD box motif. A Helicase C-terminal domain is found at 358 to 518 (GITQYYAFVE…TIPPQIDLAV (161 aa)).

This sequence belongs to the DEAD box helicase family. DDX6/DHH1 subfamily.

Its subcellular location is the cytoplasm. The protein resides in the P-body. It carries out the reaction ATP + H2O = ADP + phosphate + H(+). In terms of biological role, ATP-dependent RNA helicase involved in mRNA turnover, and more specifically in mRNA decapping. In Oryza sativa subsp. japonica (Rice), this protein is DEAD-box ATP-dependent RNA helicase 12.